The following is a 158-amino-acid chain: Endoribonuclease YbeY (158 aa).

The Zn(2+) site is built by His-119, His-123, and His-129.

The protein belongs to the endoribonuclease YbeY family. It depends on Zn(2+) as a cofactor.

It is found in the cytoplasm. Functionally, single strand-specific metallo-endoribonuclease involved in late-stage 70S ribosome quality control and in maturation of the 3' terminus of the 16S rRNA. In Shewanella woodyi (strain ATCC 51908 / MS32), this protein is Endoribonuclease YbeY.